The sequence spans 429 residues: Ribosomal RNA small subunit methyltransferase B (429 aa).

S-adenosyl-L-methionine-binding positions include 254-260 (CAAPGGK), Asp277, Asp303, and Asp322. The Nucleophile role is filled by Cys375. Positions 397–419 (ALSETGTPDQPGQQNLPGGEEGD) are disordered. Residues 400–412 (ETGTPDQPGQQNL) are compositionally biased toward polar residues.

It belongs to the class I-like SAM-binding methyltransferase superfamily. RsmB/NOP family.

The protein resides in the cytoplasm. It carries out the reaction cytidine(967) in 16S rRNA + S-adenosyl-L-methionine = 5-methylcytidine(967) in 16S rRNA + S-adenosyl-L-homocysteine + H(+). In terms of biological role, specifically methylates the cytosine at position 967 (m5C967) of 16S rRNA. This chain is Ribosomal RNA small subunit methyltransferase B, found in Salmonella enteritidis PT4 (strain P125109).